The primary structure comprises 320 residues: HPr kinase/phosphorylase (320 aa).

Catalysis depends on residues His-139 and Lys-160. 154-161 (GDSGVGKS) is a binding site for ATP. Ser-161 serves as a coordination point for Mg(2+). The Proton acceptor; for phosphorylation activity. Proton donor; for dephosphorylation activity role is filled by Asp-178. Residues 202–211 (MEIRGIGIID) form an important for the catalytic mechanism of both phosphorylation and dephosphorylation region. Glu-203 provides a ligand contact to Mg(2+). Arg-244 is an active-site residue. The important for the catalytic mechanism of dephosphorylation stretch occupies residues 265–270 (PVKTGR).

Belongs to the HPrK/P family. Homohexamer. Mg(2+) serves as cofactor.

It catalyses the reaction [HPr protein]-L-serine + ATP = [HPr protein]-O-phospho-L-serine + ADP + H(+). It carries out the reaction [HPr protein]-O-phospho-L-serine + phosphate + H(+) = [HPr protein]-L-serine + diphosphate. In terms of biological role, catalyzes the ATP- as well as the pyrophosphate-dependent phosphorylation of a specific serine residue in HPr, a phosphocarrier protein of the phosphoenolpyruvate-dependent sugar phosphotransferase system (PTS). HprK/P also catalyzes the pyrophosphate-producing, inorganic phosphate-dependent dephosphorylation (phosphorolysis) of seryl-phosphorylated HPr (P-Ser-HPr). The two antagonistic activities of HprK/P are regulated by several intracellular metabolites, which change their concentration in response to the absence or presence of rapidly metabolisable carbon sources (glucose, fructose, etc.) in the growth medium. Therefore, by controlling the phosphorylation state of HPr, HPrK/P is a sensor enzyme that plays a major role in the regulation of carbon metabolism and sugar transport: it mediates carbon catabolite repression (CCR), and regulates PTS-catalyzed carbohydrate uptake and inducer exclusion. The sequence is that of HPr kinase/phosphorylase from Limosilactobacillus reuteri (strain DSM 20016) (Lactobacillus reuteri).